Reading from the N-terminus, the 857-residue chain is Leucine--tRNA ligase (857 aa).

The 'HIGH' region signature appears at 42–52; it reads PYPSGRLHMGH. The short motif at 617–621 is the 'KMSKS' region element; the sequence is KMSKS. Residue lysine 620 participates in ATP binding.

Belongs to the class-I aminoacyl-tRNA synthetase family.

It localises to the cytoplasm. The catalysed reaction is tRNA(Leu) + L-leucine + ATP = L-leucyl-tRNA(Leu) + AMP + diphosphate. This is Leucine--tRNA ligase from Vibrio vulnificus (strain CMCP6).